A 252-amino-acid chain; its full sequence is Major prion protein (252 aa).

The signal sequence occupies residues 1 to 22 (MANLGCWMLFLFVATWSDLGLC). The interval 23–38 (KKRPKPGGWNTGGSRY) is interaction with ADGRG6. Residues 23–229 (KKRPKPGGWN…ESQAYYQRGS (207 aa)) form an interaction with GRB2, ERI3 and SYN1 region. The disordered stretch occupies residues 26–106 (PKPGGWNTGG…QWNKPSKPKT (81 aa)). Tandem repeats lie at residues 51 to 58 (PQGGGWGQ), 59 to 66 (PHGGGWGQ), 67 to 74 (PHGGGWGQ), 75 to 82 (PHGGGWGQ), and 83 to 90 (PHGGGWGQ). Positions 51-90 (PQGGGWGQPHGGGWGQPHGGGWGQPHGGGWGQPHGGGWGQ) are 5 X 8 AA tandem repeats of P-H-G-G-G-W-G-Q. Gly residues predominate over residues 52–94 (QGGGWGQPHGGGWGQPHGGGWGQPHGGGWGQPHGGGWGQGGGT). Cu(2+)-binding residues include histidine 60, glycine 61, glycine 62, histidine 68, glycine 69, glycine 70, histidine 76, glycine 77, glycine 78, histidine 84, glycine 85, and glycine 86. A disulfide bridge connects residues cysteine 178 and cysteine 213. Residues asparagine 180 and asparagine 196 are each glycosylated (N-linked (GlcNAc...) asparagine). Serine 229 is lipidated: GPI-anchor amidated serine. A propeptide spans 230-252 (SMVLFSSPPVILLISFLIFLIVG) (removed in mature form).

Belongs to the prion family. Monomer and homodimer. Has a tendency to aggregate into amyloid fibrils containing a cross-beta spine, formed by a steric zipper of superposed beta-strands. Soluble oligomers may represent an intermediate stage on the path to fibril formation. Copper binding may promote oligomerization. Interacts with GRB2, APP, ERI3/PRNPIP and SYN1. Mislocalized cytosolically exposed PrP interacts with MGRN1; this interaction alters MGRN1 subcellular location and causes lysosomal enlargement. Interacts with APP. Interacts with KIAA1191. Interacts with ADGRG6.

It localises to the cell membrane. It is found in the golgi apparatus. Its function is as follows. Its primary physiological function is unclear. May play a role in neuronal development and synaptic plasticity. May be required for neuronal myelin sheath maintenance. May promote myelin homeostasis through acting as an agonist for ADGRG6 receptor. May play a role in iron uptake and iron homeostasis. Soluble oligomers are toxic to cultured neuroblastoma cells and induce apoptosis (in vitro). Association with GPC1 (via its heparan sulfate chains) targets PRNP to lipid rafts. Also provides Cu(2+) or Zn(2+) for the ascorbate-mediated GPC1 deaminase degradation of its heparan sulfate side chains. This is Major prion protein (PRNP) from Callithrix jacchus (White-tufted-ear marmoset).